A 392-amino-acid polypeptide reads, in one-letter code: Acetyl-CoA acetyltransferase (392 aa).

Cys85 serves as the catalytic Acyl-thioester intermediate. The CoA site is built by Cys206, Ser207, Val209, and Lys332. His336 serves as the catalytic Proton acceptor.

This sequence belongs to the thiolase-like superfamily. Thiolase family. As to quaternary structure, interacts with HMG-CoA synthase (HMGCS) that catalyzes the second step in the pathway and with a DUF35 protein. The acetoacetyl-CoA thiolase/HMG-CoA synthase complex channels the intermediate via a fused CoA-binding site, which allows for efficient coupling of the endergonic thiolase reaction with the exergonic HMGCS reaction.

It carries out the reaction 2 acetyl-CoA = acetoacetyl-CoA + CoA. The protein operates within metabolic intermediate biosynthesis; (R)-mevalonate biosynthesis; (R)-mevalonate from acetyl-CoA: step 1/3. Its function is as follows. Catalyzes the condensation of two acetyl-coA molecules into acetoacetyl-CoA. Functions in the mevalonate (MVA) pathway leading to isopentenyl diphosphate (IPP), a key precursor for the biosynthesis of isoprenoid compounds that are building blocks of archaeal membrane lipids. This is Acetyl-CoA acetyltransferase from Methanocaldococcus jannaschii (strain ATCC 43067 / DSM 2661 / JAL-1 / JCM 10045 / NBRC 100440) (Methanococcus jannaschii).